Here is a 20-residue protein sequence, read N- to C-terminus: Octopamine receptor (20 aa).

This sequence belongs to the G-protein coupled receptor 1 family.

It is found in the cell membrane. Functionally, putative receptor for octopamine. Octopamine (OA) is a neurotransmitter, neurohormone, and neuromodulator in invertebrates. The activity of this receptor is mediated by G proteins which activate adenylyl cyclase. In Photinus pyralis (Common eastern firefly), this protein is Octopamine receptor.